We begin with the raw amino-acid sequence, 105 residues long: Putative membrane protein insertion efficiency factor (105 aa).

Belongs to the UPF0161 family.

It is found in the cell membrane. Functionally, could be involved in insertion of integral membrane proteins into the membrane. The protein is Putative membrane protein insertion efficiency factor of Bifidobacterium longum (strain NCC 2705).